The sequence spans 231 residues: ATP-dependent dethiobiotin synthetase BioD (231 aa).

Residue 12–17 coordinates ATP; the sequence is EVGKTV. Thr16 is a Mg(2+) binding site. Residue Lys37 is part of the active site. Ser41 contributes to the substrate binding site. Residues Asp51, 112-115, and 202-204 each bind ATP; these read EGAG and PKL. The Mg(2+) site is built by Asp51 and Glu112.

This sequence belongs to the dethiobiotin synthetase family. As to quaternary structure, homodimer. Mg(2+) serves as cofactor.

The protein localises to the cytoplasm. It catalyses the reaction (7R,8S)-7,8-diammoniononanoate + CO2 + ATP = (4R,5S)-dethiobiotin + ADP + phosphate + 3 H(+). The protein operates within cofactor biosynthesis; biotin biosynthesis; biotin from 7,8-diaminononanoate: step 1/2. Its function is as follows. Catalyzes a mechanistically unusual reaction, the ATP-dependent insertion of CO2 between the N7 and N8 nitrogen atoms of 7,8-diaminopelargonic acid (DAPA, also called 7,8-diammoniononanoate) to form a ureido ring. This chain is ATP-dependent dethiobiotin synthetase BioD, found in Bacillus subtilis subsp. natto.